We begin with the raw amino-acid sequence, 149 residues long: Transcriptional regulator MraZ (149 aa).

SpoVT-AbrB domains are found at residues 7 to 54 (KYVN…GISH) and 83 to 126 (AVQL…QPQN).

It belongs to the MraZ family. As to quaternary structure, forms oligomers.

Its subcellular location is the cytoplasm. The protein resides in the nucleoid. This Rickettsia akari (strain Hartford) protein is Transcriptional regulator MraZ.